Here is a 210-residue protein sequence, read N- to C-terminus: UPF0301 protein CPS_1252 (210 aa).

The protein belongs to the UPF0301 (AlgH) family.

The polypeptide is UPF0301 protein CPS_1252 (Colwellia psychrerythraea (strain 34H / ATCC BAA-681) (Vibrio psychroerythus)).